A 388-amino-acid chain; its full sequence is Succinate--CoA ligase [ADP-forming] subunit beta (388 aa).

The ATP-grasp domain occupies 9–244; it reads KQIFAEYQLP…PSQEDPREAL (236 aa). ATP is bound by residues lysine 46, 53–55, glutamate 99, serine 102, and glutamate 107; that span reads GRG. Residues asparagine 199 and aspartate 213 each coordinate Mg(2+). Substrate-binding positions include asparagine 264 and 321-323; that span reads GIV.

Belongs to the succinate/malate CoA ligase beta subunit family. As to quaternary structure, heterotetramer of two alpha and two beta subunits. The cofactor is Mg(2+).

The enzyme catalyses succinate + ATP + CoA = succinyl-CoA + ADP + phosphate. The catalysed reaction is GTP + succinate + CoA = succinyl-CoA + GDP + phosphate. It functions in the pathway carbohydrate metabolism; tricarboxylic acid cycle; succinate from succinyl-CoA (ligase route): step 1/1. Succinyl-CoA synthetase functions in the citric acid cycle (TCA), coupling the hydrolysis of succinyl-CoA to the synthesis of either ATP or GTP and thus represents the only step of substrate-level phosphorylation in the TCA. The beta subunit provides nucleotide specificity of the enzyme and binds the substrate succinate, while the binding sites for coenzyme A and phosphate are found in the alpha subunit. The chain is Succinate--CoA ligase [ADP-forming] subunit beta from Pasteurella multocida (strain Pm70).